Consider the following 819-residue polypeptide: Probable beta-glucosidase G (819 aa).

An N-terminal signal peptide occupies residues 1-20 (MTSASQILVWGLLAASGAQA). Asparagine 41, asparagine 59, asparagine 107, asparagine 228, and asparagine 277 each carry an N-linked (GlcNAc...) asparagine glycan. Aspartate 305 is an active-site residue. Residues asparagine 337, asparagine 344, asparagine 351, asparagine 403, asparagine 500, asparagine 509, asparagine 554, asparagine 567, asparagine 588, asparagine 627, asparagine 683, and asparagine 719 are each glycosylated (N-linked (GlcNAc...) asparagine).

It belongs to the glycosyl hydrolase 3 family.

The protein localises to the secreted. It carries out the reaction Hydrolysis of terminal, non-reducing beta-D-glucosyl residues with release of beta-D-glucose.. It participates in glycan metabolism; cellulose degradation. Beta-glucosidases are one of a number of cellulolytic enzymes involved in the degradation of cellulosic biomass. Catalyzes the last step releasing glucose from the inhibitory cellobiose. The sequence is that of Probable beta-glucosidase G (bglG) from Emericella nidulans (strain FGSC A4 / ATCC 38163 / CBS 112.46 / NRRL 194 / M139) (Aspergillus nidulans).